A 303-amino-acid chain; its full sequence is Glutathione transport system permease protein GsiD (303 aa).

The next 6 helical transmembrane spans lie at 40 to 60, 105 to 125, 144 to 164, 165 to 185, 222 to 242, and 266 to 286; these read AMTA…ARWI, LAAG…LGLL, LFAF…GSGI, ANVI…LVRG, IVVF…SLSF, and VIAP…VLAF. The ABC transmembrane type-1 domain occupies 101-290; it reads AQISLAAGVF…LTVLAFNLLG (190 aa).

The protein belongs to the binding-protein-dependent transport system permease family. In terms of assembly, the complex is composed of two ATP-binding proteins (GsiA), two transmembrane proteins (GsiC and GsiD) and a solute-binding protein (GsiB).

Its subcellular location is the cell inner membrane. Part of the ABC transporter complex GsiABCD involved in glutathione import. Probably responsible for the translocation of the substrate across the membrane. The protein is Glutathione transport system permease protein GsiD of Shigella flexneri serotype 5b (strain 8401).